The chain runs to 1278 residues: Cytoplasmic FMR1-interacting protein 2 (1278 aa).

K1062 bears the N6-acetyllysine mark.

This sequence belongs to the CYFIP family. Component of the WAVE1 complex composed of ABI2, CYFIP2, BRK1, NCKAP1 and WASF1/WAVE1. Interacts with FMR1, FXR1 and FXR2. Interacts with FMR1 isoform 6; the interaction occurs in a RNA-dependent manner. Interacts with RAC1 (activated form) which causes the complex to dissociate, releasing activated WASF1. The complex can also be activated by NCK1. Interacts with SHANK3; the interaction mediates the association of SHANK3 with the WAVE1 complex. Interacts with TMEM108 (via N-terminus); the interaction associates TMEM108 with the WAVE1 complex. Expressed in T-cells. Increased expression is observed in CD4(+) T-lymphocytes from patients with multiple sclerosis (at protein level).

It localises to the cytoplasm. The protein localises to the nucleus. Its subcellular location is the perinuclear region. The protein resides in the synapse. It is found in the synaptosome. Its function is as follows. Involved in T-cell adhesion and p53/TP53-dependent induction of apoptosis. Does not bind RNA. As component of the WAVE1 complex, required for BDNF-NTRK2 endocytic trafficking and signaling from early endosomes. The sequence is that of Cytoplasmic FMR1-interacting protein 2 from Homo sapiens (Human).